Consider the following 286-residue polypeptide: Bifunctional protein FolD (286 aa).

Residues 166 to 168 (GRS), Ser-191, and Ile-232 contribute to the NADP(+) site.

It belongs to the tetrahydrofolate dehydrogenase/cyclohydrolase family. Homodimer.

It carries out the reaction (6R)-5,10-methylene-5,6,7,8-tetrahydrofolate + NADP(+) = (6R)-5,10-methenyltetrahydrofolate + NADPH. It catalyses the reaction (6R)-5,10-methenyltetrahydrofolate + H2O = (6R)-10-formyltetrahydrofolate + H(+). It participates in one-carbon metabolism; tetrahydrofolate interconversion. Catalyzes the oxidation of 5,10-methylenetetrahydrofolate to 5,10-methenyltetrahydrofolate and then the hydrolysis of 5,10-methenyltetrahydrofolate to 10-formyltetrahydrofolate. The protein is Bifunctional protein FolD of Herpetosiphon aurantiacus (strain ATCC 23779 / DSM 785 / 114-95).